Consider the following 64-residue polypeptide: DNA gyrase inhibitor YacG (64 aa).

Zn(2+)-binding residues include C9, C12, C28, and C32. The tract at residues 45-64 (NAIAGAPDMSDSDGWSEDQY) is disordered. The segment covering 54–64 (SDSDGWSEDQY) has biased composition (acidic residues).

The protein belongs to the DNA gyrase inhibitor YacG family. Interacts with GyrB. The cofactor is Zn(2+).

Functionally, inhibits all the catalytic activities of DNA gyrase by preventing its interaction with DNA. Acts by binding directly to the C-terminal domain of GyrB, which probably disrupts DNA binding by the gyrase. The protein is DNA gyrase inhibitor YacG of Vibrio parahaemolyticus serotype O3:K6 (strain RIMD 2210633).